The sequence spans 127 residues: UPF0102 protein Gura_3756 (127 aa).

The protein belongs to the UPF0102 family.

This chain is UPF0102 protein Gura_3756, found in Geotalea uraniireducens (strain Rf4) (Geobacter uraniireducens).